Reading from the N-terminus, the 255-residue chain is Aliphatic sulfonates import ATP-binding protein SsuB (255 aa).

Residues 5–231 form the ABC transporter domain; it reads IRVNEKAFGK…PRSRTSPVFQ (227 aa). 39–46 provides a ligand contact to ATP; that stretch reads GPSGCGKS.

It belongs to the ABC transporter superfamily. Aliphatic sulfonates importer (TC 3.A.1.17.2) family. As to quaternary structure, the complex is composed of two ATP-binding proteins (SsuB), two transmembrane proteins (SsuC) and a solute-binding protein (SsuA).

The protein resides in the cell membrane. The enzyme catalyses ATP + H2O + aliphatic sulfonate-[sulfonate-binding protein]Side 1 = ADP + phosphate + aliphatic sulfonateSide 2 + [sulfonate-binding protein]Side 1.. Its function is as follows. Part of the ABC transporter complex SsuABC involved in aliphatic sulfonates import. Responsible for energy coupling to the transport system. The chain is Aliphatic sulfonates import ATP-binding protein SsuB from Bacillus licheniformis (strain ATCC 14580 / DSM 13 / JCM 2505 / CCUG 7422 / NBRC 12200 / NCIMB 9375 / NCTC 10341 / NRRL NRS-1264 / Gibson 46).